The primary structure comprises 259 residues: Small ribosomal subunit protein uS2 (259 aa).

The interval 232–259 (KAMEAEETKAAEKAVETEAKEETPQEAK) is disordered.

Belongs to the universal ribosomal protein uS2 family.

The polypeptide is Small ribosomal subunit protein uS2 (Maridesulfovibrio salexigens (strain ATCC 14822 / DSM 2638 / NCIMB 8403 / VKM B-1763) (Desulfovibrio salexigens)).